We begin with the raw amino-acid sequence, 492 residues long: Protein nucleotidyltransferase YdiU (492 aa).

8 residues coordinate ATP: G90, G92, R93, K113, D125, G126, R176, and R183. D252 serves as the catalytic Proton acceptor. Mg(2+)-binding residues include N253 and D262. An ATP-binding site is contributed by D262.

It belongs to the SELO family. Mg(2+) is required as a cofactor. The cofactor is Mn(2+).

It carries out the reaction L-seryl-[protein] + ATP = 3-O-(5'-adenylyl)-L-seryl-[protein] + diphosphate. It catalyses the reaction L-threonyl-[protein] + ATP = 3-O-(5'-adenylyl)-L-threonyl-[protein] + diphosphate. The catalysed reaction is L-tyrosyl-[protein] + ATP = O-(5'-adenylyl)-L-tyrosyl-[protein] + diphosphate. The enzyme catalyses L-histidyl-[protein] + UTP = N(tele)-(5'-uridylyl)-L-histidyl-[protein] + diphosphate. It carries out the reaction L-seryl-[protein] + UTP = O-(5'-uridylyl)-L-seryl-[protein] + diphosphate. It catalyses the reaction L-tyrosyl-[protein] + UTP = O-(5'-uridylyl)-L-tyrosyl-[protein] + diphosphate. Nucleotidyltransferase involved in the post-translational modification of proteins. It can catalyze the addition of adenosine monophosphate (AMP) or uridine monophosphate (UMP) to a protein, resulting in modifications known as AMPylation and UMPylation. In Thioalkalivibrio sulfidiphilus (strain HL-EbGR7), this protein is Protein nucleotidyltransferase YdiU.